Consider the following 186-residue polypeptide: MKTAQELRAGNVFMVGNDPMVVQKTEYIKGGRSSAKVSMKLKNLLTGAASETIYKADDKFDVVILSRKNCTYSYFADPMYVFMDEEFNQYEIEADNIGDALKFIVDGMEDQCEVTFYEGNPISVELPTIIVREVDYTEPAVKGDTSGKVMKTARLVGGTEIQVMSYIENGDKVEIDTRTGEFRKRA.

The protein belongs to the elongation factor P family.

Its subcellular location is the cytoplasm. The protein operates within protein biosynthesis; polypeptide chain elongation. Its function is as follows. Involved in peptide bond synthesis. Stimulates efficient translation and peptide-bond synthesis on native or reconstituted 70S ribosomes in vitro. Probably functions indirectly by altering the affinity of the ribosome for aminoacyl-tRNA, thus increasing their reactivity as acceptors for peptidyl transferase. This Neisseria gonorrhoeae (strain NCCP11945) protein is Elongation factor P.